The chain runs to 60 residues: Large ribosomal subunit protein bL32 (60 aa).

The disordered stretch occupies residues 1 to 25 (MAVQQNKKSPSKRGMHRSHNALNVP). Positions 9-19 (SPSKRGMHRSH) are enriched in basic residues.

The protein belongs to the bacterial ribosomal protein bL32 family.

The polypeptide is Large ribosomal subunit protein bL32 (Polaromonas naphthalenivorans (strain CJ2)).